We begin with the raw amino-acid sequence, 283 residues long: Type III pantothenate kinase (283 aa).

9–16 (DIGNTRLK) is an ATP binding site. Residues Y116 and 123–126 (GVDR) contribute to the substrate site. D125 acts as the Proton acceptor in catalysis. T149 is an ATP binding site. T211 is a substrate binding site.

Belongs to the type III pantothenate kinase family. In terms of assembly, homodimer. It depends on NH4(+) as a cofactor. The cofactor is K(+).

It is found in the cytoplasm. The catalysed reaction is (R)-pantothenate + ATP = (R)-4'-phosphopantothenate + ADP + H(+). It participates in cofactor biosynthesis; coenzyme A biosynthesis; CoA from (R)-pantothenate: step 1/5. Its function is as follows. Catalyzes the phosphorylation of pantothenate (Pan), the first step in CoA biosynthesis. The protein is Type III pantothenate kinase of Cupriavidus taiwanensis (strain DSM 17343 / BCRC 17206 / CCUG 44338 / CIP 107171 / LMG 19424 / R1) (Ralstonia taiwanensis (strain LMG 19424)).